Here is a 359-residue protein sequence, read N- to C-terminus: Aminomethyltransferase (359 aa).

This sequence belongs to the GcvT family. In terms of assembly, the glycine cleavage system is composed of four proteins: P, T, L and H.

The catalysed reaction is N(6)-[(R)-S(8)-aminomethyldihydrolipoyl]-L-lysyl-[protein] + (6S)-5,6,7,8-tetrahydrofolate = N(6)-[(R)-dihydrolipoyl]-L-lysyl-[protein] + (6R)-5,10-methylene-5,6,7,8-tetrahydrofolate + NH4(+). In terms of biological role, the glycine cleavage system catalyzes the degradation of glycine. The protein is Aminomethyltransferase of Synechococcus sp. (strain RCC307).